A 222-amino-acid chain; its full sequence is Triosephosphate isomerase (222 aa).

9–11 (NYK) is a substrate binding site. His-93 functions as the Electrophile in the catalytic mechanism. The Proton acceptor role is filled by Glu-141. Substrate is bound by residues Ile-146, Gly-181, and 202–203 (AS).

Belongs to the triosephosphate isomerase family. Homotetramer; dimer of dimers.

The protein resides in the cytoplasm. It catalyses the reaction D-glyceraldehyde 3-phosphate = dihydroxyacetone phosphate. Its pathway is carbohydrate biosynthesis; gluconeogenesis. It participates in carbohydrate degradation; glycolysis; D-glyceraldehyde 3-phosphate from glycerone phosphate: step 1/1. Its function is as follows. Involved in the gluconeogenesis. Catalyzes stereospecifically the conversion of dihydroxyacetone phosphate (DHAP) to D-glyceraldehyde-3-phosphate (G3P). This chain is Triosephosphate isomerase, found in Methanosarcina barkeri (strain Fusaro / DSM 804).